A 174-amino-acid chain; its full sequence is MARLLRALRGLPWLEAPGRARGCAGSGRGDTGSLIKSKLSLSKADWQKKLTPEQFYVTREKGTEAPFSGMYLKNKETGMYHCVCCDSPLFSSEKKYCSGTGWPSFSEAHGTKGSDESHTGILRRLDTSLGCPRMEVVCKQCEAHLGHVFPDGPDPTGQRFCINSVALKFKPSKP.

The N-terminal 61 residues, 1–61, are a transit peptide targeting the mitochondrion; that stretch reads MARLLRALRG…PEQFYVTREK (61 aa). The MsrB domain maps to 62–172; it reads GTEAPFSGMY…NSVALKFKPS (111 aa). Cys82, Cys85, Cys138, and Cys141 together coordinate Zn(2+). Cys161 serves as the catalytic Nucleophile.

It belongs to the MsrB Met sulfoxide reductase family. Zn(2+) serves as cofactor.

Its subcellular location is the mitochondrion. It catalyses the reaction L-methionyl-[protein] + [thioredoxin]-disulfide + H2O = L-methionyl-(R)-S-oxide-[protein] + [thioredoxin]-dithiol. The catalysed reaction is [thioredoxin]-disulfide + L-methionine + H2O = L-methionine (R)-S-oxide + [thioredoxin]-dithiol. Methionine-sulfoxide reductase that specifically reduces methionine (R)-sulfoxide back to methionine. While in many cases, methionine oxidation is the result of random oxidation following oxidative stress, methionine oxidation is also a post-translational modification that takes place on specific residue. Upon oxidative stress, may play a role in the preservation of mitochondrial integrity by decreasing the intracellular reactive oxygen species build-up through its scavenging role, hence contributing to cell survival and protein maintenance. The chain is Methionine-R-sulfoxide reductase B2, mitochondrial (Msrb2) from Rattus norvegicus (Rat).